The primary structure comprises 305 residues: Alpha-N-acetylgalactosaminide alpha-2,6-sialyltransferase 3 (305 aa).

At 1 to 8 the chain is on the cytoplasmic side; sequence MACILKRK. The helical; Signal-anchor for type II membrane protein transmembrane segment at 9–28 threads the bilayer; it reads PVLVVSFIALCILLLAMRLV. Topologically, residues 29–305 are lumenal; that stretch reads NDATFPLLLN…VFTHPNWTLS (277 aa). C80 and C229 are disulfide-bonded. N-linked (GlcNAc...) asparagine glycosylation is found at N239 and N301.

Belongs to the glycosyltransferase 29 family. As to expression, in adult tissues, high expression in brain, lung and heart and to a lesser extent in kidney, mammary gland, spleen, testis and thymus.

It localises to the golgi apparatus membrane. It catalyses the reaction an alpha-Neu5Ac-(2-&gt;3)-beta-D-Gal-(1-&gt;3)-D-GlcNAc derivative + CMP-N-acetyl-beta-neuraminate = an alpha-Neu5Ac-(2-&gt;3)-beta-D-Gal-(1-&gt;3)-[alpha-Neu5Ac-(2-&gt;6)]-D-GlcNAc derivative + CMP + H(+). The catalysed reaction is a ganglioside GM1b (d18:1(4E)) + CMP-N-acetyl-beta-neuraminate = a ganglioside GD1alpha (d18:1(4E)) + CMP + H(+). The enzyme catalyses a globoside MSGG + CMP-N-acetyl-beta-neuraminate = a globoside DSGG + CMP + H(+). It carries out the reaction 3-O-[alpha-Neu5Ac-(2-&gt;3)-beta-D-Gal-(1-&gt;3)-alpha-D-GalNAc]-L-Ser-[protein] + CMP-N-acetyl-beta-neuraminate = a 3-O-{alpha-Neu5Ac-(2-&gt;3)-beta-D-Gal-(1-&gt;3)-[alpha-Neu5Ac-(2-&gt;6)]-alpha-D-GalNAc}-L-seryl-[protein] + CMP + H(+). It catalyses the reaction 3-O-[alpha-Neu5Ac-(2-&gt;3)-beta-D-Gal-(1-&gt;3)-alpha-D-GalNAc]-L-Thr-[protein] + CMP-N-acetyl-beta-neuraminate = a 3-O-{alpha-Neu5Ac-(2-&gt;3)-beta-D-Gal-(1-&gt;3)-[alpha-Neu5Ac-(2-&gt;6)]-alpha-D-GalNAc}-L-threonyl-[protein] + CMP + H(+). The protein operates within protein modification; protein glycosylation. Its pathway is glycolipid biosynthesis. Its function is as follows. Transfers the sialyl group (N-acetyl-alpha-neuraminyl or NeuAc) from CMP-NeuAc to the GalNAc residue on the NeuAc-alpha-2,3-Gal-beta-1,3-GalNAc sequence of glycoproteins and glycolipids forming an alpha-2,6-linkage. Produces branched type disialyl structures by transfer of a sialyl group onto a GalNAc residue inside the backbone core chains. ST6GalNAcIII prefers glycolipids to glycoproteins, predominantly catalyzing the biosynthesis of ganglioside GD1alpha from GM1b. GD1alpha is a critical molecule in the communication and interaction between neuronal cells and their supportive cells, particularly in brain tissues, and functions as an adhesion molecule in the process of metastasis. Sialylation of glycoproteins or glycosphingolipids is very important in tumor development, neuronal development, nerve repair, immunological processes and regulation of hormone sensitivity. The sequence is that of Alpha-N-acetylgalactosaminide alpha-2,6-sialyltransferase 3 (St6galnac3) from Mus musculus (Mouse).